The following is an 858-amino-acid chain: Leucine--tRNA ligase (858 aa).

The 'HIGH' region motif lies at 42–52; sequence PYPSGRLHMGH. The short motif at 618-622 is the 'KMSKS' region element; sequence KMSKS. Lys621 provides a ligand contact to ATP.

The protein belongs to the class-I aminoacyl-tRNA synthetase family.

It localises to the cytoplasm. It carries out the reaction tRNA(Leu) + L-leucine + ATP = L-leucyl-tRNA(Leu) + AMP + diphosphate. In Vibrio cholerae serotype O1 (strain ATCC 39315 / El Tor Inaba N16961), this protein is Leucine--tRNA ligase.